The sequence spans 562 residues: Cytochrome c oxidase subunit 1 (562 aa).

A helical transmembrane segment spans residues 21-41; sequence TLYFLVLGFLALIVGSLFGPF. Residue His72 coordinates Fe(II)-heme a. The next 8 membrane-spanning stretches (helical) occupy residues 74–94, 105–125, 144–164, 187–207, 227–247, 267–287, 300–320, and 345–365; these read VLNA…YLPA, LMWL…LPLL, AFYL…YIVL, VVFW…AVLF, LFWW…YAII, LAFL…QFAD, VLTL…AASL, and AFVA…GGIV. Cu cation is bound by residues His233, Tyr237, His282, and His283. Residues 233–237 constitute a cross-link (1'-histidyl-3'-tyrosine (His-Tyr)); sequence HPIVY. His384 lines the heme a3 pocket. 4 consecutive transmembrane segments (helical) span residues 385–405, 420–440, 471–491, and 527–547; these read FHLQ…YWLL, LGLA…VGLH, VLAG…LFSV, and IGFW…PTLV. Residue His386 coordinates Fe(II)-heme a.

This sequence belongs to the heme-copper respiratory oxidase family. It depends on heme as a cofactor. Requires Cu cation as cofactor.

The protein resides in the cell membrane. It carries out the reaction 4 Fe(II)-[cytochrome c] + O2 + 8 H(+)(in) = 4 Fe(III)-[cytochrome c] + 2 H2O + 4 H(+)(out). It participates in energy metabolism; oxidative phosphorylation. The sequence is that of Cytochrome c oxidase subunit 1 (cbaA) from Thermus thermophilus (strain ATCC 27634 / DSM 579 / HB8).